The primary structure comprises 318 residues: Taste receptor type 2 member 60 (318 aa).

The Extracellular portion of the chain corresponds to 1–7 (MNGDHMV). Residues 8 to 28 (LGSSVTDKKAIILVTILLLLR) traverse the membrane as a helical segment. Topologically, residues 29–40 (LVAIAGNGFITA) are cytoplasmic. The helical transmembrane segment at 41–61 (ALGVEWVLRRMLLPCDKLLVS) threads the bilayer. Residues 62–88 (LGASHFCLQSVVMGKTIYVFLYPMAFP) lie on the Extracellular side of the membrane. A helical membrane pass occupies residues 89–109 (YNPVLQFLAFQWDFLNAATLW). Over 110 to 128 (FSTWLSVFYCVKIATFTHP) the chain is Cytoplasmic. The helical transmembrane segment at 129 to 149 (VFFWLKHKLSGWLPWMVFSYV) threads the bilayer. Residues 150 to 183 (GLSSFTTILFFIGNHRMYQNYLKNHLQPWNVTGN) are Extracellular-facing. Residue N179 is glycosylated (N-linked (GlcNAc...) asparagine). A helical transmembrane segment spans residues 184-204 (SIRSYCEKFYLFPLKMITWTM). At 205–234 (PTAVFFICMILLITSLGRHMKKALLTTSGF) the chain is on the cytoplasmic side. The chain crosses the membrane as a helical span at residues 235-255 (REPSVQAHIKALLALLSFAML). The Extracellular segment spans residues 256 to 264 (FISYFLSLV). A helical membrane pass occupies residues 265-285 (FSAAGIFPPLDFKFWVWESVI). At 286 to 318 (YLCAAVHPIILLFSNCRLRAVLKSRRSSRCGTP) the chain is on the cytoplasmic side.

Belongs to the G-protein coupled receptor T2R family.

The protein localises to the membrane. Functionally, receptor that may play a role in the perception of bitterness and is gustducin-linked. May play a role in sensing the chemical composition of the gastrointestinal content. The activity of this receptor may stimulate alpha gustducin, mediate PLC-beta-2 activation and lead to the gating of TRPM5. The polypeptide is Taste receptor type 2 member 60 (TAS2R60) (Pan troglodytes (Chimpanzee)).